Reading from the N-terminus, the 130-residue chain is Small ribosomal subunit protein uS11 (130 aa).

Belongs to the universal ribosomal protein uS11 family. As to quaternary structure, part of the 30S ribosomal subunit. Interacts with proteins S7 and S18. Binds to IF-3.

Functionally, located on the platform of the 30S subunit, it bridges several disparate RNA helices of the 16S rRNA. Forms part of the Shine-Dalgarno cleft in the 70S ribosome. This Shewanella amazonensis (strain ATCC BAA-1098 / SB2B) protein is Small ribosomal subunit protein uS11.